The following is a 645-amino-acid chain: 1,4-alpha-glucan branching enzyme GlgB (645 aa).

The active-site Nucleophile is aspartate 309. Catalysis depends on glutamate 352, which acts as the Proton donor. Residues 619–645 are disordered; it reads VKTRKGSKKQDGSKTKVRSNVTSRGKR. Polar residues predominate over residues 636–645; sequence RSNVTSRGKR.

This sequence belongs to the glycosyl hydrolase 13 family. GlgB subfamily. Monomer.

It catalyses the reaction Transfers a segment of a (1-&gt;4)-alpha-D-glucan chain to a primary hydroxy group in a similar glucan chain.. The protein operates within glycan biosynthesis; glycogen biosynthesis. Functionally, catalyzes the formation of the alpha-1,6-glucosidic linkages in glycogen by scission of a 1,4-alpha-linked oligosaccharide from growing alpha-1,4-glucan chains and the subsequent attachment of the oligosaccharide to the alpha-1,6 position. The polypeptide is 1,4-alpha-glucan branching enzyme GlgB (Bacillus anthracis (strain CDC 684 / NRRL 3495)).